The primary structure comprises 474 residues: Cytochrome c biogenesis protein CcsB (474 aa).

3 consecutive transmembrane segments (helical) span residues 36 to 56 (LKLA…GTVI), 96 to 116 (SWWF…CTFR), and 182 to 202 (VGPI…MIGA).

This sequence belongs to the Ccs1/CcsB family. May interact with CcsA.

It is found in the cell inner membrane. Its function is as follows. Required during biogenesis of c-type cytochromes (cytochrome c6 and cytochrome f) at the step of heme attachment. This is Cytochrome c biogenesis protein CcsB from Gloeobacter violaceus (strain ATCC 29082 / PCC 7421).